A 119-amino-acid polypeptide reads, in one-letter code: NADH-quinone oxidoreductase subunit A (119 aa).

3 helical membrane-spanning segments follow: residues 9 to 29, 63 to 83, and 88 to 108; these read IFLFILVGIGVGVAPQVLGYI, LVAILFILFDLEIAFLFPWAV, and IGALGFWSVMVFLTILVVGFI.

Belongs to the complex I subunit 3 family. As to quaternary structure, NDH-1 is composed of 14 different subunits. Subunits NuoA, H, J, K, L, M, N constitute the membrane sector of the complex.

The protein resides in the cell inner membrane. The catalysed reaction is a quinone + NADH + 5 H(+)(in) = a quinol + NAD(+) + 4 H(+)(out). Its function is as follows. NDH-1 shuttles electrons from NADH, via FMN and iron-sulfur (Fe-S) centers, to quinones in the respiratory chain. The immediate electron acceptor for the enzyme in this species is believed to be ubiquinone. Couples the redox reaction to proton translocation (for every two electrons transferred, four hydrogen ions are translocated across the cytoplasmic membrane), and thus conserves the redox energy in a proton gradient. In Albidiferax ferrireducens (strain ATCC BAA-621 / DSM 15236 / T118) (Rhodoferax ferrireducens), this protein is NADH-quinone oxidoreductase subunit A.